We begin with the raw amino-acid sequence, 312 residues long: Olfactory receptor 4L1 (312 aa).

Residues 1 to 25 (MDLKNGSLVTEFILLGFFGRWELQI) are Extracellular-facing. N5 carries N-linked (GlcNAc...) asparagine glycosylation. Residues 26 to 49 (FFFVTFSLIYGATVMGNILIMVTV) form a helical membrane-spanning segment. The Cytoplasmic segment spans residues 50–57 (TCRSTLHS). The chain crosses the membrane as a helical span at residues 58 to 79 (PLYFLLGNLSFLDMCLSTATTP). Over 80–100 (KMIIDLLTDHKTISVWGCVTQ) the chain is Extracellular. Cysteines 97 and 189 form a disulfide. Residues 101-120 (MFFMHFFGGAEMTLLIIMAF) traverse the membrane as a helical segment. Residues 121–139 (DRYVAICKPLHYRTIMSHK) are Cytoplasmic-facing. The helical transmembrane segment at 140-158 (LLKGFAILSWIIGFLHSIS) threads the bilayer. At 159 to 195 (QIVLTMNLPFCGHNVINNIFCDLPLVIKLACIETYTL) the chain is on the extracellular side. Residues 196-219 (ELFVIADSGLLSFTCFILLLVSYI) traverse the membrane as a helical segment. The Cytoplasmic segment spans residues 220–235 (VILVSVPKKSSHGLSK). A helical transmembrane segment spans residues 236–258 (ALSTLSAHIIVVTLFFGPCIFIY). Topologically, residues 259 to 269 (VWPFSSLASNK) are extracellular. N-linked (GlcNAc...) asparagine glycosylation occurs at N268. The helical transmembrane segment at 270 to 289 (TLAVFYTVITPLLNPSIYTL) threads the bilayer. Residues 290 to 312 (RNKKMQEAIRKLRFQYVSSAQNF) are Cytoplasmic-facing.

It belongs to the G-protein coupled receptor 1 family.

It is found in the cell membrane. Its function is as follows. Odorant receptor. This chain is Olfactory receptor 4L1 (OR4L1), found in Homo sapiens (Human).